Reading from the N-terminus, the 242-residue chain is Lysosomal membrane ascorbate-dependent ferrireductase CYB561A3 (242 aa).

Topologically, residues 1–4 (MASG) are cytoplasmic. The helical transmembrane segment at 5–25 (WFYLSCMVLGSLGSMCILFTA) threads the bilayer. Positions 12–219 (VLGSLGSMCI…FGLLVLYVLL (208 aa)) constitute a Cytochrome b561 domain. Topologically, residues 26 to 40 (YWMQYWRGGFAWDGT) are lumenal. The chain crosses the membrane as a helical span at residues 41 to 61 (VLMFNWHPVLMVAGMVVLYGA). Residues histidine 47 and arginine 67 each coordinate heme b. Residues 62 to 81 (ASLVYRLPSSWVGPRLPWKV) lie on the Cytoplasmic side of the membrane. 2 residues coordinate L-ascorbate: arginine 76 and lysine 80. Residues 82-102 (LHAALHLLAFTCTVVGLIAVF) form a helical membrane-spanning segment. Heme b-binding positions include histidine 83, 112 to 115 (HLYS), and histidine 117. The Lumenal portion of the chain corresponds to 103-119 (RFHNHSRIAHLYSLHSW). The chain crosses the membrane as a helical span at residues 120–140 (LGITTVVLFACQWFLGFAVFL). Over 141–154 (LPWASQWLRSLLKP) the chain is Cytoplasmic. Residue arginine 149 participates in L-ascorbate binding. The helical transmembrane segment at 155-175 (LHVFFGACILSLSITSVISGI) threads the bilayer. Residues histidine 156 and glutamate 177 each contribute to the heme b site. Over 176–202 (NEKLFFVLKNATKPYSSLPGEAVFANS) the chain is Lumenal. The chain crosses the membrane as a helical span at residues 203–223 (TGLLVVAFGLLVLYVLLASSW). Lysine 224 lines the heme b pocket. At 224 to 242 (KRPDPGALTDRQPLLHDRE) the chain is on the cytoplasmic side.

In terms of assembly, homodimer. Heme b is required as a cofactor. N-glycosylated. As to expression, present in lung, spleen, thymus and testis. Present at low level in brain, heart, liver and kidney. Expressed in the alveolar macrophages of the lung, in the white pulp of the spleen, widespread in the thymus, and in the Sertoli cells of the testis (at protein level).

The protein localises to the late endosome membrane. It is found in the lysosome membrane. It catalyses the reaction Fe(3+)(out) + L-ascorbate(in) = monodehydro-L-ascorbate radical(in) + Fe(2+)(out) + H(+). Functionally, transmembrane reductase that uses ascorbate as an electron donor in the cytoplasm and transfers electrons across membranes to reduce iron cations Fe(3+) into Fe(2+) in the lumen of the late endosome and lysosome. Reduced iron can then be extruded from the late endosome and lysosome to the cytoplasm by divalent metal-specific transporters. It is therefore most probably involved in endosomal and lysosomal cellular iron homeostasis. In Mus musculus (Mouse), this protein is Lysosomal membrane ascorbate-dependent ferrireductase CYB561A3.